A 329-amino-acid polypeptide reads, in one-letter code: Glutamine synthetase (329 aa).

The region spanning 4–86 (YKLEYIWLDA…VMCEVMMPDA (83 aa)) is the GS beta-grasp domain. One can recognise a GS catalytic domain in the interval 89-329 (PHASNTRATV…GDPYQMLLSS (241 aa)). Residues Glu-109 and Glu-111 each contribute to the Mg(2+) site. Glu-167 is a binding site for ATP. Mg(2+) is bound by residues Glu-172 and Glu-179. Glu-278 is a binding site for L-glutamate.

This sequence belongs to the glutamine synthetase family. In terms of assembly, homooctamer and homotetramer. It depends on Mg(2+) as a cofactor.

The protein resides in the cytoplasm. It catalyses the reaction L-glutamate + NH4(+) + ATP = L-glutamine + ADP + phosphate + H(+). Its function is as follows. Catalyzes the ATP-dependent biosynthesis of glutamine from glutamate and ammonia. This chain is Glutamine synthetase, found in Rhizobium meliloti (Ensifer meliloti).